An 883-amino-acid polypeptide reads, in one-letter code: Mitogen-activated protein kinase kinase kinase YODA (883 aa).

3 disordered regions span residues 28 to 193 (GFAS…AEMF), 303 to 364 (CSPE…PPLL), and 376 to 396 (SAAT…TVSP). A compositionally biased stretch (low complexity) spans 57 to 72 (SRLPSRSPSPSTRVSR). Over residues 94-105 (VTSTDSGMNGSQ) the composition is skewed to polar residues. The segment covering 143–165 (SVSSGSSVGDIPSDSLLSPLASD) has biased composition (low complexity). Composition is skewed to polar residues over residues 167-189 (ENGN…NKNS) and 314-328 (RMTS…QSGA). The 257-residue stretch at 400-656 (WKKGRLLGMG…AAQLLDHAFV (257 aa)) folds into the Protein kinase domain. ATP is bound by residues 406 to 414 (LGMGSFGHV) and lysine 429. Aspartate 525 functions as the Proton acceptor in the catalytic mechanism. Disordered regions lie at residues 712-773 (GSGF…GAIP) and 787-838 (EGIG…IQPG). A compositionally biased stretch (low complexity) spans 733-756 (SPIFHSHSPHISGRRSPSPISSPH).

Belongs to the protein kinase superfamily. STE Ser/Thr protein kinase family. MAP kinase kinase kinase subfamily. In terms of assembly, interacts with ASK7. Interacts with BSK12/SSP. Binds to BASL and MPK6. Expressed in roots, leaves, guard cells, stems, flowers and siliques.

Its subcellular location is the cytoplasm. It localises to the cell cortex. The protein resides in the cell membrane. The catalysed reaction is L-seryl-[protein] + ATP = O-phospho-L-seryl-[protein] + ADP + H(+). It catalyses the reaction L-threonyl-[protein] + ATP = O-phospho-L-threonyl-[protein] + ADP + H(+). Its activity is regulated as follows. Contains an N-terminal autoinhibitory domain. In terms of biological role, functions in a MAP kinase cascade that acts as a molecular switch to regulate the first cell fate decisions in the zygote and the early embryo. Promotes elongation of the zygote and development of its basal daughter cell into the extra-embryonic suspensor. In stomatal development, acts downstream of the LRR receptor TMM, but upstream of the MKK4/MKK5-MPK3/MPK6 module to regulate stomatal cell fate before the guard mother cell (GMC) is specified. Plays a central role in both guard cell identity and pattern formation. This MAPK cascade also functions downstream of the ER receptor in regulating coordinated local cell proliferation, which shapes the morphology of plant organs. Upon brassinosteroid signaling, is inhibited by phosphorylation of its auto-inhibitory N-terminal domain by the GSK3-like kinase ASK7. This is Mitogen-activated protein kinase kinase kinase YODA from Arabidopsis thaliana (Mouse-ear cress).